A 782-amino-acid polypeptide reads, in one-letter code: Potassium transporter 6 (782 aa).

At 1–18 (MEIESGSYQNAKKESWRT) the chain is on the cytoplasmic side. Residues 19–39 (VLTLAYQSLGVVYGDLSISPL) form a helical membrane-spanning segment. Residues 40 to 61 (YVYKSTFAEDIHHSESNEEIFG) lie on the Extracellular side of the membrane. A helical transmembrane segment spans residues 62–82 (VLSFIFWTITLVPLLKYVFIV). The Cytoplasmic segment spans residues 83–153 (LRADDNGEGG…TLEKHGVLQK (71 aa)). The chain crosses the membrane as a helical span at residues 154–174 (ILLVLALIGTCMVIGDGVLTP). The Extracellular portion of the chain corresponds to 175–195 (AISVFSAVSGVELSMSKEHHK). The helical transmembrane segment at 196–216 (YIELPAACVILIGLFALQHYG) threads the bilayer. Residues 217 to 219 (THR) are Cytoplasmic-facing. Residues 220–240 (VGFLFAPVILLWLMCISAIGV) form a helical membrane-spanning segment. The Extracellular portion of the chain corresponds to 241–270 (YNIFHWNPHVYQALSPYYMYKFLKKTQSRG). The chain crosses the membrane as a helical span at residues 271-291 (WMSLGGILLCITGSEAMFADL). At 292–296 (GHFSQ) the chain is on the cytoplasmic side. A helical membrane pass occupies residues 297–317 (LSIKIAFTSLVYPSLILAYMG). At 318 to 347 (QAAYLSQHHIIESEYNIGFYVSVPERLRWP) the chain is on the extracellular side. The chain crosses the membrane as a helical span at residues 348-368 (VLVIAILAAVVGSQAIITGTF). The Cytoplasmic portion of the chain corresponds to 369 to 395 (SIIKQCSALGCFPKVKIVHTSSKIHGQ). A helical membrane pass occupies residues 396 to 416 (IYIPEINWILMVLCLAVTIGF). Over 417–421 (RDTKR) the chain is Extracellular. The next 2 membrane-spanning stretches (helical) occupy residues 422 to 442 (LGNA…CLMS) and 443 to 463 (LVIV…VVFF). At 464–474 (GTIESLYFSAS) the chain is on the extracellular side. Residues 475 to 495 (LIKFLEGAWVPIALAFCFLLA) form a helical membrane-spanning segment. The Cytoplasmic portion of the chain corresponds to 496–782 (MCTWHYGTLK…TLEVGMIYNV (287 aa)). The segment covering 664 to 675 (YESDIDDPDKPG) has biased composition (basic and acidic residues). The segment at 664–693 (YESDIDDPDKPGTSEIRSPKPKKKSKSKVK) is disordered. Residues 682–693 (PKPKKKSKSKVK) are compositionally biased toward basic residues.

Belongs to the HAK/KUP transporter (TC 2.A.72.3) family.

It is found in the cell membrane. Its function is as follows. Probable potassium transporter. This Arabidopsis thaliana (Mouse-ear cress) protein is Potassium transporter 6 (POT6).